A 78-amino-acid polypeptide reads, in one-letter code: Glycophorin-E (78 aa).

The signal sequence occupies residues 1 to 19; it reads MYGKIIFVLLLSGIVSISA. Residues 20–52 lie on the Extracellular side of the membrane; it reads SSTTGVAMHTSTSSSVTKSYISSQTNGITLINW. The chain crosses the membrane as a helical span at residues 53–73; the sequence is WAMARVIFEVMLVVVGMIILI. The Cytoplasmic portion of the chain corresponds to 74–78; that stretch reads SYCIR.

It belongs to the glycophorin-A family. In terms of processing, the N-terminal extracellular domain is heavily glycosylated on serine and threonine residues. Erythrocytes.

It is found in the membrane. This protein is a minor sialoglycoprotein in human erythrocyte membranes. The sequence is that of Glycophorin-E (GYPE) from Homo sapiens (Human).